Reading from the N-terminus, the 124-residue chain is Fluoride-specific ion channel FluC (124 aa).

The next 4 membrane-spanning stretches (helical) occupy residues 2 to 22 (LNIAIAVFIGGGLGSVLRWLI), 35 to 55 (TGTLVANCIGAFIIAFGIAWF), 71 to 91 (TGFCGGLTTFSTFSVEVVALF), and 100 to 120 (LGTMGANLAGSFLMTAFAFWL). Na(+) is bound by residues G75 and T78.

This sequence belongs to the fluoride channel Fluc/FEX (TC 1.A.43) family.

The protein localises to the cell inner membrane. It carries out the reaction fluoride(in) = fluoride(out). Its activity is regulated as follows. Na(+) is not transported, but it plays an essential structural role and its presence is essential for fluoride channel function. Fluoride-specific ion channel. Important for reducing fluoride concentration in the cell, thus reducing its toxicity. This is Fluoride-specific ion channel FluC from Proteus mirabilis (strain HI4320).